The chain runs to 558 residues: MPIEFVCKIKFAEGEEAKGASTEGGGTGMLDEGLRRQKEGMADLASFASSSSLHGLARALGTSERLGFRQTLWGLALLVSLGLFLYQATWSAATYLERPHLAALREETRRELTFPAITLCNVNRFRFSALTDADIYHLANLTGLPPKSRKGHRPSELQYPPPNMLDIFQRTGHQLEDMLKSCNFSGQNCSSEDFSVVYTRYGKCYTFNGNKTSPKRVRQGGTGNGLEMMLDIQQDEYLPIWRETNETTLEAGIRVQIHSQNEPPYIHQLGFGVSPGFQTFVSCQEQRLTYLPQPWGNCRASSEPVIPGYDTYSVSACRLHCESTQVQRECNCRMVHMPGDADICAPSKIKCVDKALASLQKSTGDSCPCETPCNLTRYGKELSMVKIPSRGSARYLSRKYQKSEEYIRDNFLILDIFFEALNYETIEQKKAYDIAGLLGDIGGQMGLFIGASILTILEILDYIYEVAKNKIKQLLKPKKSQKQTNQRNLIQEQIQRTKNLREQNLKAQLTAGAIATVRFEEVKVKAANDVAQPHSAHPTSVLPNHHNAQQAVQQDFAC.

At 1–71 the chain is on the cytoplasmic side; the sequence is MPIEFVCKIK…TSERLGFRQT (71 aa). The helical transmembrane segment at 72–92 threads the bilayer; that stretch reads LWGLALLVSLGLFLYQATWSA. Over 93–433 the chain is Extracellular; sequence ATYLERPHLA…ETIEQKKAYD (341 aa). Intrachain disulfides connect C120-C204 and C182-C189. Residues N140, N183, N188, N210, and N245 are each glycosylated (N-linked (GlcNAc...) asparagine). Cystine bridges form between C298-C373, C317-C369, C321-C367, C330-C351, and C332-C344. N-linked (GlcNAc...) asparagine glycosylation occurs at N374. The helical transmembrane segment at 434–454 threads the bilayer; it reads IAGLLGDIGGQMGLFIGASIL. Positions 450 to 452 match the GAS motif; ion selectivity filter motif; that stretch reads GAS. The Cytoplasmic portion of the chain corresponds to 455–558; the sequence is TILEILDYIY…QQAVQQDFAC (104 aa).

It belongs to the amiloride-sensitive sodium channel (TC 1.A.6) family. ASIC4 subfamily. Homotrimer. Heterotrimer; with other ASIC proteins producing functional channels. Expressed in central nervous system.

The protein resides in the cell membrane. The enzyme catalyses Na(+)(in) = Na(+)(out). Does not exhibit measurable stand-alone pH-gated sodium channel activity but may form pH-gated heterotrimeric sodium channels. This is Acid-sensing ion channel 4-B from Danio rerio (Zebrafish).